A 108-amino-acid polypeptide reads, in one-letter code: DNA-binding protein HBbu (108 aa).

The protein belongs to the bacterial histone-like protein family.

Histone-like DNA-binding protein which is capable of wrapping DNA to stabilize it, and thus to prevent its denaturation under extreme environmental conditions. In Borrelia andersonii (Borreliella andersonii), this protein is DNA-binding protein HBbu (hbb).